We begin with the raw amino-acid sequence, 363 residues long: Protein MAK32 (363 aa).

The protein to S.pombe SpAC4G8.14c.

Necessary for the structural stability of L-A double-stranded RNA-containing particles. Necessary for growth at 37 degrees Celsius as well as for maintenance of the killer plasmid. The sequence is that of Protein MAK32 (MAK32) from Saccharomyces cerevisiae (strain ATCC 204508 / S288c) (Baker's yeast).